The sequence spans 355 residues: Putative GPI-anchor transamidase (355 aa).

The N-terminal stretch at 1–24 (MFNIMLVKFVVIFALILASCRVEA) is a signal peptide. Active-site residues include H165 and C207.

It belongs to the peptidase C13 family.

The protein operates within glycolipid biosynthesis; glycosylphosphatidylinositol-anchor biosynthesis. Functionally, mediates GPI anchoring in the endoplasmic reticulum, by replacing a protein's C-terminal GPI attachment signal peptide with a pre-assembled GPI. During this transamidation reaction, the GPI transamidase forms a carbonyl intermediate with the substrate protein. This chain is Putative GPI-anchor transamidase, found in Drosophila melanogaster (Fruit fly).